Here is a 360-residue protein sequence, read N- to C-terminus: MMDPLDNGLFDLPDYEHTEDENFPPLPPPHSPGADDEAEDVANGDDWTENAGQTQREEAPKPARRVVKRPQPKLDGQRLASQRGLPALRHMFDDVKFKGKGHETEDLKILLRQMENWAHRLFPKLQFEDFLNRLESMGNKKEVQTCLKKIRMDLPIVHDDFLSEEVVVQTEDHAIDMPSEDFSFPDELHVPSPSQPVKVDLSEETLQRIERNRRLALERRMEKMQAQAESQALSQATQSDPNEIPDDAFDAEMLDAVESMTGIPTASQSPPHVDKDLSLVLHSHDLPVQDVSQSPAPCPKPQGDAPPEKALSLVHSALPSTSDPTSPRKPLTEQLPDDADTSSATPYTEAPACTNTKEEY.

Disordered regions lie at residues 1-80 (MMDP…QRLA), 178-199 (PSED…PVKV), 220-246 (RMEK…EIPD), and 289-360 (QDVS…KEEY). Residues 34-48 (ADDEAEDVANGDDWT) are compositionally biased toward acidic residues. Positions 62-71 (PARRVVKRPQ) are enriched in basic residues. The segment at 74–150 (LDGQRLASQR…KEVQTCLKKI (77 aa)) is interaction with TIMELESS. Low complexity predominate over residues 225–239 (QAQAESQALSQATQS).

Belongs to the CSM3 family. As to quaternary structure, interacts with timeless, which impairs timeless self-association.

It localises to the cytoplasm. Its subcellular location is the nucleus. Its function is as follows. Plays an important role in the control of DNA replication and the maintenance of replication fork stability. Important for cell survival after DNA damage or replication stress. May be required for the replication checkpoint induced by hydroxyurea or ultraviolet light. In Xenopus laevis (African clawed frog), this protein is TIMELESS-interacting protein (tipin).